Reading from the N-terminus, the 1850-residue chain is Voltage-dependent L-type calcium channel subunit alpha-1S (1850 aa).

Residues 1 to 23 (MEPSSPQDEGLRKKQPKKPVPEI) are disordered. The Cytoplasmic segment spans residues 1 to 51 (MEPSSPQDEGLRKKQPKKPVPEILPRPPRALFCLTLQNPLRKACISVVEWK). An I repeat occupies 38–337 (NPLRKACISV…LVLGVLSGEF (300 aa)). The helical transmembrane segment at 52–70 (PFETIILLTIFANCVALAV) threads the bilayer. The Extracellular segment spans residues 71–85 (YLPMPEDDNNTLNLG). Residues 86–106 (LEKLEYFFLIVFSIEAAMKII) form a helical membrane-spanning segment. At 107–115 (AYGFLFHQD) the chain is on the cytoplasmic side. A helical transmembrane segment spans residues 116–136 (AYLRSGWNVLDFIIVFLGVFT). The Extracellular segment spans residues 137-160 (AILEQVNIIQTNTAPMSSKGAGLD). Residues 161–179 (VKALRAFRVLRPLRLVSGV) form a helical membrane-spanning segment. The Cytoplasmic segment spans residues 180 to 196 (PSLQVVLNSIFKAMLPL). The chain crosses the membrane as a helical span at residues 197 to 218 (FHIALLVLFMVIIYAIIGLELF). The Extracellular portion of the chain corresponds to 219-279 (KGKMHKTCYF…HGITHFDNFG (61 aa)). 2 disulfides stabilise this stretch: C226/C254 and C245/C261. The segment at residues 280–301 (FSMLTVYQCISMEGWTDVLYWV) is an intramembrane region (pore-forming). The Selectivity filter of repeat I signature appears at 290-293 (SMEG). E292 contacts Ca(2+). Over 302–309 (NDAIGNEW) the chain is Extracellular. Residues 310–330 (PWIYFVTLILLGSFFILNLVL) form a helical membrane-spanning segment. At 331–432 (GVLSGEFTKE…WKCHDLVKSK (102 aa)) the chain is on the cytoplasmic side. Positions 357-374 (QQLEEDLRGYMSWITQGE) are binding to the beta subunit. Phosphoserine occurs at positions 393 and 397. The II repeat unit spans residues 418–664 (NRVFRWKCHD…VFLAIAVDNL (247 aa)). The helical transmembrane segment at 433 to 451 (VFYWLVILIVALNTLSIAS) threads the bilayer. Residues 452–462 (EHHNQPLWLTH) lie on the Extracellular side of the membrane. The helical transmembrane segment at 463–483 (LQDVANRVLLALFTIEMLMKM) threads the bilayer. Residues 484–494 (YGLGLRQYFMS) lie on the Cytoplasmic side of the membrane. The chain crosses the membrane as a helical span at residues 495–514 (IFNRFDCFVVCSGILEILLV). Residues 515–523 (ESGAMTPLG) lie on the Extracellular side of the membrane. The chain crosses the membrane as a helical span at residues 524–542 (ISVLRCIRLLRLFKITKYW). The Cytoplasmic segment spans residues 543-561 (TSLSNLVASLLNSIRSIAS). The chain crosses the membrane as a helical span at residues 562–581 (LLLLLFLFMIIFALLGMQLF). Over 582 to 601 (GGRYDFEDTEVRRSNFDNFP) the chain is Extracellular. An intramembrane region (pore-forming) is located at residues 602–623 (QALISVFQVLTGEDWNSVMYNG). A Selectivity filter of repeat II motif is present at residues 612–615 (TGED). Residue E614 participates in Ca(2+) binding. Topologically, residues 624–633 (IMAYGGPSYP) are extracellular. A helical membrane pass occupies residues 634-653 (GVLVCIYFIILFVCGNYILL). The Cytoplasmic portion of the chain corresponds to 654–799 (NVFLAIAVDN…VLCHRIVNAT (146 aa)). Disordered stretches follow at residues 673–717 (AQKA…IPTT) and 731–758 (EVKD…SPRP). At S687 the chain carries Phosphoserine; by PKA. A compositionally biased stretch (basic and acidic residues) spans 690 to 711 (LPDKSEEERSTMTKKLEQKPKG). Over residues 742-751 (PGDDEEDEPE) the composition is skewed to acidic residues. Residues 786–1068 (NKIRVLCHRI…IFVGFVIVTF (283 aa)) form an III repeat. A helical transmembrane segment spans residues 800–818 (WFTNFILLFILLSSAALAA). The Extracellular portion of the chain corresponds to 819 to 830 (EDPIRADSMRNQ). Residues 831-850 (ILEYFDYVFTAVFTVEIVLK) traverse the membrane as a helical segment. The Cytoplasmic portion of the chain corresponds to 851-866 (MTTYGAFLHKGSFCRN). A helical membrane pass occupies residues 867-885 (YFNILDLLVVAVSLISMGL). At 886 to 892 (ESSAISV) the chain is on the extracellular side. Residues 893–911 (VKILRVLRVLRPLRAINRA) traverse the membrane as a helical segment. Residues 912–930 (KGLKHVVQCVFVAIRTIGN) are Cytoplasmic-facing. The helical transmembrane segment at 931 to 950 (IVLVTTLLQFMFACIGVQLF) threads the bilayer. At 951-1000 (KGKFYSCNDLSKMTEEECRGYYYIYKDGDPTQIELRPRQWIHNDFHFDNV) the chain is on the extracellular side. C957 and C968 form a disulfide bridge. Residues 988–1077 (RQWIHNDFHF…FQEQGETEYK (90 aa)) form a dihydropyridine binding region. The pore-forming intramembrane region spans 1001-1021 (LSAMMSLFTVSTFEGWPQLLY). Positions 1012 to 1015 (TFEG) match the Selectivity filter of repeat III motif. A Ca(2+)-binding site is contributed by E1014. Residues 1022 to 1038 (KAIDSNEEDTGPVYNNR) are Extracellular-facing. A helical transmembrane segment spans residues 1039–1060 (VEMAIFFIIYIILIAFFMMNIF). The Cytoplasmic segment spans residues 1061-1118 (VGFVIVTFQEQGETEYKNCELDKNQRQCVQYALKARPLRCYIPKNPYQYQVWYVVTSS). The IV repeat unit spans residues 1105–1384 (NPYQYQVWYV…LFVAVIMDNF (280 aa)). The chain crosses the membrane as a helical span at residues 1119 to 1140 (YFEYLMFALIMLNTICLGMQHY). N-linked (GlcNAc...) asparagine glycosylation occurs at N1141. The Extracellular portion of the chain corresponds to 1141-1148 (NQSEQMNH). The chain crosses the membrane as a helical span at residues 1149–1170 (ISDILNVAFTIIFTLEMILKLI). At 1171–1180 (AFKPRGYFGD) the chain is on the cytoplasmic side. A helical membrane pass occupies residues 1181–1200 (PWNVFDFLIVIGSIIDVILS). Residues 1201 to 1231 (EIDTLLASSGGLYCLGGGCGNVDPDESARIS) lie on the Extracellular side of the membrane. The chain crosses the membrane as a helical span at residues 1232–1250 (SAFFRLFRVMRLIKLLSRA). At 1251–1268 (EGVRTLLWTFIKSFQALP) the chain is on the cytoplasmic side. The helical transmembrane segment at 1269–1289 (YVALLIVMLFFIYAVIGMQMF) threads the bilayer. The Extracellular segment spans residues 1290–1311 (GKIAMVDGTQINRNNNFQTFPQ). Residues 1312–1330 (AVLLLFRCATGEAWQEILL) constitute an intramembrane region (pore-forming). The Selectivity filter of repeat IV motif lies at 1321–1324 (TGEA). The Extracellular segment spans residues 1331–1356 (ACSYGKRCDPESDYAPGEEYACGTNF). The tract at residues 1337 to 1403 (RCDPESDYAP…LGPHHLDEFK (67 aa)) is dihydropyridine binding. Residues C1338 and C1352 are joined by a disulfide bond. The interval 1349 to 1391 (EYACGTNFAYYYFISFYMLCAFLIINLFVAVIMDNFDYLTRDW) is phenylalkylamine binding. The chain crosses the membrane as a helical span at residues 1357–1381 (AYYYFISFYMLCAFLIINLFVAVIM). Topologically, residues 1382-1850 (DNFDYLTRDW…PKGGAMPREP (469 aa)) are cytoplasmic. The segment at 1522 to 1542 (KFYATFLIQEHFRKFMKRQEE) is interaction with calmodulin. S1575 is subject to Phosphoserine; by PKA and CAMK2. T1579 carries the phosphothreonine modification. The residue at position 1617 (S1617) is a Phosphoserine; by PKA. Positions 1697 to 1779 (PVTREGPFSQ…FEERVPRNSA (83 aa)) are disordered. A compositionally biased stretch (polar residues) spans 1706-1716 (QPCSVSGVNSR). Basic and acidic residues-rich tracts occupy residues 1717–1726 (SHVDKLERQM) and 1745–1756 (QEKHPVHEEGKG).

It belongs to the calcium channel alpha-1 subunit (TC 1.A.1.11) family. CACNA1S subfamily. Component of a calcium channel complex consisting of a pore-forming alpha subunit (CACNA1S) and the ancillary subunits CACNB1 or CACNB2, CACNG1 and CACNA2D1. The channel complex contains alpha, beta, gamma and delta subunits in a 1:1:1:1 ratio, i.e. it contains either CACNB1 or CACNB2. CACNA1S channel activity is modulated by the auxiliary subunits (CACNB1 or CACNB2, CACNG1 and CACNA2D1). Interacts with DYSF and JSRP1. Interacts with RYR1. Interacts with STAC, STAC2 and STAC3 (via their SH3 domains). Interacts with CALM. The alpha-1S subunit is found in two isoforms in the skeletal muscle: a minor form of 212 kDa containing the complete amino acid sequence, and a major form of 190 kDa derived from the full-length form by post-translational proteolysis close to Phe-1690. In terms of processing, phosphorylated. Phosphorylation by PKA activates the calcium channel. Both the minor and major forms are phosphorylated in vitro by PKA. Phosphorylation at Ser-1575 is involved in beta-adrenergic-mediated regulation of the channel. In terms of tissue distribution, skeletal muscle specific.

Its subcellular location is the cell membrane. It localises to the sarcolemma. The protein localises to the T-tubule. The catalysed reaction is Ca(2+)(in) = Ca(2+)(out). With respect to regulation, channel activity is blocked by dihydropyridines (DHP), phenylalkylamines, and by benzothiazepines. Its function is as follows. Pore-forming, alpha-1S subunit of the voltage-gated calcium channel that gives rise to L-type calcium currents in skeletal muscle. Calcium channels containing the alpha-1S subunit play an important role in excitation-contraction coupling in skeletal muscle via their interaction with RYR1, which triggers Ca(2+) release from the sarcplasmic reticulum and ultimately results in muscle contraction. Long-lasting (L-type) calcium channels belong to the 'high-voltage activated' (HVA) group. The sequence is that of Voltage-dependent L-type calcium channel subunit alpha-1S (Cacna1s) from Rattus norvegicus (Rat).